The sequence spans 437 residues: MGKRLDQPQMYPQYTYYYPHYLQTKQSYAPAPHPMAPPSPSTNSSSNNSSNNSSGEQLSKTNLYIRGLPPGTTDQDLIKLCQPYGKIVSTKAILDKNTNQCKGYGFVDFDSPAAAQKAVASLKANGVQAQMAKQQEQDPTNLYISNLPISMDEQELENMLKPFGHVISTRILRDANGVSRGVGFARMESTEKCEVVIQHFNGKYLKTPPGIPAPSEPLLCKFADGGQKKRQNQSKYTQNGRPWPREGEAGMALTYDPTAAIQNGFYSSPYSIATNRMIPQTSITPFIAASPVSTYQVQSTSWMPHPPYVMQPTGAVITPTMDHPMSMQPANMMGPLTQQMNHLSLGTTGTIQSQDRIMILHQLLCQYMTAAAPMQGTYIPQYTPVPPTAVSIEGVVADTSPQTVAPSSQDTSGQQQQIAVDTSNEHAPAYSYQQSKP.

The segment at 28–57 is disordered; that stretch reads YAPAPHPMAPPSPSTNSSSNNSSNNSSGEQ. Residues 31 to 40 are compositionally biased toward pro residues; sequence APHPMAPPSP. Residues 41-54 show a composition bias toward low complexity; that stretch reads STNSSSNNSSNNSS. RRM domains lie at 61-134 and 140-225; these read TNLY…MAKQ and TNLY…FADG. Positions 399 to 422 are enriched in polar residues; the sequence is TSPQTVAPSSQDTSGQQQQIAVDT. Residues 399 to 437 are disordered; that stretch reads TSPQTVAPSSQDTSGQQQQIAVDTSNEHAPAYSYQQSKP.

As to expression, expressed in fetal brain, fetal lung, fetal liver, heart, brain, placenta, lung, liver, muscle, kidney and pancreas.

It localises to the cytoplasm. Functionally, binds poly(A) and poly(U) oligoribonucleotides. This chain is RNA-binding motif, single-stranded-interacting protein 3 (RBMS3), found in Homo sapiens (Human).